Reading from the N-terminus, the 42-residue chain is CLGENVPCDKDRPNCCSKYECLEPTGYGRCYASYYSYKKKTL.

3 disulfide bridges follow: cysteine 1–cysteine 16, cysteine 8–cysteine 21, and cysteine 15–cysteine 30.

It belongs to the neurotoxin 14 (magi-1) family. 08 (Ltx-4) subfamily. As to expression, expressed by the venom gland.

Its subcellular location is the secreted. Inhibits voltage-gated calcium channels (Cav) in rat cerebellar granule cells. The protein is Omega-theraphotoxin-Asp3a of Aphonopelma sp. (American tarantula).